The following is a 391-amino-acid chain: Curcumin synthase 2 (391 aa).

Cysteine 166 is a catalytic residue.

This sequence belongs to the thiolase-like superfamily. Chalcone/stilbene synthases family. Homodimer.

The enzyme catalyses (E)-feruloylacetyl-CoA + (E)-feruloyl-CoA + H2O = curcumin + CO2 + 2 CoA. The protein operates within secondary metabolite biosynthesis; flavonoid biosynthesis. In terms of biological role, catalyzes the synthesis of curcumin by condensing feruloyl-CoA with a diketide-CoA in the curcuminoid biosynthesis. The polypeptide is Curcumin synthase 2 (CURS2) (Curcuma longa (Turmeric)).